Reading from the N-terminus, the 210-residue chain is Uracil phosphoribosyltransferase (210 aa).

5-phospho-alpha-D-ribose 1-diphosphate is bound by residues Arg-78, Arg-103, and 130 to 138 (DPMLATGGT). Residues Ile-193 and 198–200 (GDA) contribute to the uracil site. A 5-phospho-alpha-D-ribose 1-diphosphate-binding site is contributed by Asp-199.

Belongs to the UPRTase family. Mg(2+) serves as cofactor.

It carries out the reaction UMP + diphosphate = 5-phospho-alpha-D-ribose 1-diphosphate + uracil. Its pathway is pyrimidine metabolism; UMP biosynthesis via salvage pathway; UMP from uracil: step 1/1. Its activity is regulated as follows. Allosterically activated by GTP. Functionally, catalyzes the conversion of uracil and 5-phospho-alpha-D-ribose 1-diphosphate (PRPP) to UMP and diphosphate. This is Uracil phosphoribosyltransferase from Stenotrophomonas maltophilia (strain R551-3).